The chain runs to 359 residues: Serine/threonine-protein kinase mos (359 aa).

Positions 63–336 (VLLLEPLGSG…LLERLEQECA (274 aa)) constitute a Protein kinase domain. Residues 69–77 (LGSGGFGSV) and K90 each bind ATP. D189 (proton acceptor) is an active-site residue.

This sequence belongs to the protein kinase superfamily. Ser/Thr protein kinase family.

It localises to the cytoplasm. It catalyses the reaction L-seryl-[protein] + ATP = O-phospho-L-seryl-[protein] + ADP + H(+). The catalysed reaction is L-threonyl-[protein] + ATP = O-phospho-L-threonyl-[protein] + ADP + H(+). Functionally, serine/threonine kinase involved in the regulation of MAPK signaling. The chain is Serine/threonine-protein kinase mos (mos) from Xenopus laevis (African clawed frog).